The primary structure comprises 274 residues: PTS system sorbose-specific EIID component (274 aa).

In terms of domain architecture, PTS EIID spans 4–273 (KKITQGDLVS…GIIGNALGFL (270 aa)). Transmembrane regions (helical) follow at residues 61-81 (LVFFNTTPAVCGPVIAVTAAM), 99-119 (IKVGLMGPLAGVGDPLVWGTL), 126-146 (LGASLALSGNILGPLLFFFIF), 186-206 (ILGLFVMGVLVTKWTTINVPL), 226-246 (ILDQLCPGLLALGLTLLMVRL), and 253-273 (PVWLIFALFGLGIIGNALGFL).

Its subcellular location is the cell inner membrane. The phosphoenolpyruvate-dependent sugar phosphotransferase system (PTS), a major carbohydrate active transport system, catalyzes the phosphorylation of incoming sugar substrates concomitant with their translocation across the cell membrane. The enzyme II SorABFM PTS system is involved in sorbose transport. The chain is PTS system sorbose-specific EIID component from Klebsiella pneumoniae.